The chain runs to 421 residues: Histidine--tRNA ligase (421 aa).

Belongs to the class-II aminoacyl-tRNA synthetase family. As to quaternary structure, homodimer.

It localises to the cytoplasm. It catalyses the reaction tRNA(His) + L-histidine + ATP = L-histidyl-tRNA(His) + AMP + diphosphate + H(+). This Ureaplasma urealyticum serovar 10 (strain ATCC 33699 / Western) protein is Histidine--tRNA ligase.